Reading from the N-terminus, the 514-residue chain is ATP synthase subunit alpha (514 aa).

170–177 provides a ligand contact to ATP; sequence GDRQTGKT.

It belongs to the ATPase alpha/beta chains family. As to quaternary structure, F-type ATPases have 2 components, CF(1) - the catalytic core - and CF(0) - the membrane proton channel. CF(1) has five subunits: alpha(3), beta(3), gamma(1), delta(1), epsilon(1). CF(0) has three main subunits: a(1), b(2) and c(9-12). The alpha and beta chains form an alternating ring which encloses part of the gamma chain. CF(1) is attached to CF(0) by a central stalk formed by the gamma and epsilon chains, while a peripheral stalk is formed by the delta and b chains.

The protein localises to the cell inner membrane. The catalysed reaction is ATP + H2O + 4 H(+)(in) = ADP + phosphate + 5 H(+)(out). Produces ATP from ADP in the presence of a proton gradient across the membrane. The alpha chain is a regulatory subunit. The polypeptide is ATP synthase subunit alpha (Acidithiobacillus ferrooxidans (strain ATCC 23270 / DSM 14882 / CIP 104768 / NCIMB 8455) (Ferrobacillus ferrooxidans (strain ATCC 23270))).